The sequence spans 391 residues: 8-amino-7-oxononanoate synthase (391 aa).

Substrate is bound at residue Arg-24. A pyridoxal 5'-phosphate-binding site is contributed by 112–113 (GY). His-137 contributes to the substrate binding site. Residues Ser-183, His-211, and Thr-240 each contribute to the pyridoxal 5'-phosphate site. Lys-243 is subject to N6-(pyridoxal phosphate)lysine. Thr-357 provides a ligand contact to substrate.

The protein belongs to the class-II pyridoxal-phosphate-dependent aminotransferase family. BioF subfamily. As to quaternary structure, homodimer. Pyridoxal 5'-phosphate is required as a cofactor.

It carries out the reaction 6-carboxyhexanoyl-[ACP] + L-alanine + H(+) = (8S)-8-amino-7-oxononanoate + holo-[ACP] + CO2. It functions in the pathway cofactor biosynthesis; biotin biosynthesis. Catalyzes the decarboxylative condensation of pimeloyl-[acyl-carrier protein] and L-alanine to produce 8-amino-7-oxononanoate (AON), [acyl-carrier protein], and carbon dioxide. The polypeptide is 8-amino-7-oxononanoate synthase (Alkalilimnicola ehrlichii (strain ATCC BAA-1101 / DSM 17681 / MLHE-1)).